A 482-amino-acid chain; its full sequence is Zinc finger CCCH domain-containing protein 40 (482 aa).

The C3H1-type zinc finger occupies 157 to 184 (RNRAHVCSFYVRGECTRGAECPYRHEMP). The 74-residue stretch at 228–301 (RTLYIGGLNN…IRLKLMWGKP (74 aa)) folds into the RRM domain. Composition is skewed to low complexity over residues 329-347 (SQQQ…GQQQ) and 389-428 (PGPQ…YGGY). A disordered region spans residues 329–482 (SQQQSGDQPQ…VPPPQQTTQN (154 aa)). A compositionally biased stretch (pro residues) spans 429-446 (MPPPRMPYPPPPQYPPYQ). A compositionally biased stretch (low complexity) spans 452 to 466 (PAQSQASSSQQPAPA). Positions 473 to 482 (VPPPQQTTQN) are enriched in pro residues.

This Oryza sativa subsp. japonica (Rice) protein is Zinc finger CCCH domain-containing protein 40.